A 349-amino-acid polypeptide reads, in one-letter code: Phenylalanine--tRNA ligase alpha subunit (349 aa).

E259 is a Mg(2+) binding site.

This sequence belongs to the class-II aminoacyl-tRNA synthetase family. Phe-tRNA synthetase alpha subunit type 1 subfamily. Tetramer of two alpha and two beta subunits. Requires Mg(2+) as cofactor.

Its subcellular location is the cytoplasm. It carries out the reaction tRNA(Phe) + L-phenylalanine + ATP = L-phenylalanyl-tRNA(Phe) + AMP + diphosphate + H(+). The polypeptide is Phenylalanine--tRNA ligase alpha subunit (Lactobacillus johnsonii (strain CNCM I-12250 / La1 / NCC 533)).